The primary structure comprises 291 residues: Ribosome maturation factor RimP (291 aa).

The tract at residues Glu-188–His-291 is disordered. A compositionally biased stretch (acidic residues) spans Glu-193–Asp-211. Composition is skewed to basic and acidic residues over residues Glu-212–Ala-237 and Ala-245–Gln-254.

This sequence belongs to the RimP family.

It is found in the cytoplasm. Its function is as follows. Required for maturation of 30S ribosomal subunits. This chain is Ribosome maturation factor RimP, found in Azorhizobium caulinodans (strain ATCC 43989 / DSM 5975 / JCM 20966 / LMG 6465 / NBRC 14845 / NCIMB 13405 / ORS 571).